The chain runs to 604 residues: DNA polymerase alpha subunit B (604 aa).

Positions 109 to 171 are disordered; the sequence is ETLLNSYTTP…KYSSRSNRGE (63 aa). The span at 113-141 shows a compositional bias: polar residues; it reads NSYTTPSKGSQKRTITTPETPLTKRSVSA. Residues Thr-129 and Thr-132 each carry the phosphothreonine modification. Phosphoserine occurs at positions 143, 149, 154, and 156. Low complexity predominate over residues 143 to 160; it reads SPHQLLSPSSFSPSATPP.

Belongs to the DNA polymerase alpha subunit B family. In terms of assembly, component of the alpha DNA polymerase complex (also known as the alpha DNA polymerase-primase complex) consisting of four subunits: the catalytic subunit POLA1, the regulatory subunit POLA2, and the primase complex subunits PRIM1 and PRIM2 respectively. Within the complex, POLA1 directly interacts with PRIM2. In terms of processing, phosphorylated in a cell cycle-dependent manner, in G2/M phase.

The protein resides in the nucleus. Its function is as follows. Accessory subunit of the DNA polymerase alpha complex (also known as the alpha DNA polymerase-primase complex) which plays an essential role in the initiation of DNA synthesis. During the S phase of the cell cycle, the DNA polymerase alpha complex (composed of a catalytic subunit POLA1, an accessory subunit POLA2 and two primase subunits, the catalytic subunit PRIM1 and the regulatory subunit PRIM2) is recruited to DNA at the replicative forks via direct interactions with MCM10 and WDHD1. The primase subunit of the polymerase alpha complex initiates DNA synthesis by oligomerising short RNA primers on both leading and lagging strands. These primers are initially extended by the polymerase alpha catalytic subunit and subsequently transferred to polymerase delta and polymerase epsilon for processive synthesis on the lagging and leading strand, respectively. The protein is DNA polymerase alpha subunit B (POLA2) of Bos taurus (Bovine).